The primary structure comprises 226 residues: Large ribosomal subunit protein uL1 (226 aa).

It belongs to the universal ribosomal protein uL1 family. As to quaternary structure, part of the 50S ribosomal subunit.

Binds directly to 23S rRNA. The L1 stalk is quite mobile in the ribosome, and is involved in E site tRNA release. In terms of biological role, protein L1 is also a translational repressor protein, it controls the translation of the L11 operon by binding to its mRNA. The sequence is that of Large ribosomal subunit protein uL1 from Treponema pallidum (strain Nichols).